The following is a 163-amino-acid chain: Phosphopantetheine adenylyltransferase (163 aa).

Ser-9 is a substrate binding site. Residues 9–10 (SF) and His-17 each bind ATP. Positions 41, 75, and 89 each coordinate substrate. Residues 90–92 (GIR), Glu-100, and 125–131 (HLYVRSD) each bind ATP.

Belongs to the bacterial CoaD family. In terms of assembly, homohexamer. Mg(2+) serves as cofactor.

Its subcellular location is the cytoplasm. It carries out the reaction (R)-4'-phosphopantetheine + ATP + H(+) = 3'-dephospho-CoA + diphosphate. It functions in the pathway cofactor biosynthesis; coenzyme A biosynthesis; CoA from (R)-pantothenate: step 4/5. Its function is as follows. Reversibly transfers an adenylyl group from ATP to 4'-phosphopantetheine, yielding dephospho-CoA (dPCoA) and pyrophosphate. In Borreliella burgdorferi (strain ZS7) (Borrelia burgdorferi), this protein is Phosphopantetheine adenylyltransferase.